The primary structure comprises 85 residues: UPF0335 protein BARBAKC583_0130 (85 aa).

Belongs to the UPF0335 family.

The chain is UPF0335 protein BARBAKC583_0130 from Bartonella bacilliformis (strain ATCC 35685 / KC583 / Herrer 020/F12,63).